We begin with the raw amino-acid sequence, 375 residues long: Phospho-N-acetylmuramoyl-pentapeptide-transferase (375 aa).

The next 10 helical transmembrane spans lie at 2–22 (IGLL…TPLF), 55–75 (AVII…LAVL), 82–102 (PTAS…VGFV), 120–140 (GKII…LNFP), 158–178 (IPWL…FVIW), 198–218 (GLAT…SLFQ), 237–257 (PMDL…FLWW), 264–284 (IFMG…FAIF), 289–309 (ILVA…IIQV), and 345–365 (WLLS…DWLI).

It belongs to the glycosyltransferase 4 family. MraY subfamily. The cofactor is Mg(2+).

The protein localises to the cell membrane. The enzyme catalyses UDP-N-acetyl-alpha-D-muramoyl-L-alanyl-gamma-D-glutamyl-meso-2,6-diaminopimeloyl-D-alanyl-D-alanine + di-trans,octa-cis-undecaprenyl phosphate = di-trans,octa-cis-undecaprenyl diphospho-N-acetyl-alpha-D-muramoyl-L-alanyl-D-glutamyl-meso-2,6-diaminopimeloyl-D-alanyl-D-alanine + UMP. It participates in cell wall biogenesis; peptidoglycan biosynthesis. Its function is as follows. Catalyzes the initial step of the lipid cycle reactions in the biosynthesis of the cell wall peptidoglycan: transfers peptidoglycan precursor phospho-MurNAc-pentapeptide from UDP-MurNAc-pentapeptide onto the lipid carrier undecaprenyl phosphate, yielding undecaprenyl-pyrophosphoryl-MurNAc-pentapeptide, known as lipid I. In Micrococcus luteus (strain ATCC 4698 / DSM 20030 / JCM 1464 / CCM 169 / CCUG 5858 / IAM 1056 / NBRC 3333 / NCIMB 9278 / NCTC 2665 / VKM Ac-2230) (Micrococcus lysodeikticus), this protein is Phospho-N-acetylmuramoyl-pentapeptide-transferase.